We begin with the raw amino-acid sequence, 124 residues long: MFLLSLLHFFHPSLIPSLSLSHTHSSSLPPYRLHCTALSYRDLLTKKSANFRSPIYRSHVNEKGTLTHSFRPTKDMQSGNCWFTILRKARNLLNHGILLSSNNRSFCFIIQISKINPFERFLEM.

Positions methionine 1–serine 21 are cleaved as a signal peptide.

This is an uncharacterized protein from Schizosaccharomyces pombe (strain 972 / ATCC 24843) (Fission yeast).